The following is a 164-amino-acid chain: uncharacterized protein (164 aa).

A helical membrane pass occupies residues 46 to 66 (FIRPNIYLIIFIIIVLLLLYY). A coiled-coil region spans residues 72 to 137 (KADKEKEKLE…YNLNKENLRE (66 aa)). Over residues 76-91 (EKEKLEDTDKEFDKST) the composition is skewed to basic and acidic residues. A disordered region spans residues 76 to 114 (EKEKLEDTDKEFDKSTNNDTNSKKIYHRQKNSKTLNSSK).

It localises to the membrane. This is an uncharacterized protein from Acanthamoeba polyphaga mimivirus (APMV).